The following is a 187-amino-acid chain: Small ribosomal subunit protein uS4 (187 aa).

Positions Arg-105–Val-174 constitute an S4 RNA-binding domain.

It belongs to the universal ribosomal protein uS4 family. As to quaternary structure, part of the 30S ribosomal subunit. Contacts protein S5. The interaction surface between S4 and S5 is involved in control of translational fidelity.

One of the primary rRNA binding proteins, it binds directly to 16S rRNA where it nucleates assembly of the body of the 30S subunit. Functionally, with S5 and S12 plays an important role in translational accuracy. In Methanocaldococcus jannaschii (strain ATCC 43067 / DSM 2661 / JAL-1 / JCM 10045 / NBRC 100440) (Methanococcus jannaschii), this protein is Small ribosomal subunit protein uS4.